Here is a 357-residue protein sequence, read N- to C-terminus: Cobalt-precorrin-5B C(1)-methyltransferase (357 aa).

The protein belongs to the CbiD family.

The catalysed reaction is Co-precorrin-5B + S-adenosyl-L-methionine = Co-precorrin-6A + S-adenosyl-L-homocysteine. The protein operates within cofactor biosynthesis; adenosylcobalamin biosynthesis; cob(II)yrinate a,c-diamide from sirohydrochlorin (anaerobic route): step 6/10. Catalyzes the methylation of C-1 in cobalt-precorrin-5B to form cobalt-precorrin-6A. This Paramagnetospirillum magneticum (strain ATCC 700264 / AMB-1) (Magnetospirillum magneticum) protein is Cobalt-precorrin-5B C(1)-methyltransferase.